Reading from the N-terminus, the 107-residue chain is Integration host factor subunit alpha (107 aa).

It belongs to the bacterial histone-like protein family. As to quaternary structure, heterodimer of an alpha and a beta chain.

In terms of biological role, this protein is one of the two subunits of integration host factor, a specific DNA-binding protein that functions in genetic recombination as well as in transcriptional and translational control. In Brucella suis (strain ATCC 23445 / NCTC 10510), this protein is Integration host factor subunit alpha.